Here is a 207-residue protein sequence, read N- to C-terminus: Holliday junction branch migration complex subunit RuvA (207 aa).

Residues 1–65 are domain I; the sequence is MYDYIRGILT…ETEHVLYGFS (65 aa). Positions 66 to 144 are domain II; that stretch reads SRRERECFRM…DLLPLDSKAI (79 aa). Residues 145–155 form a flexible linker region; sequence ASWESVKPSCM. Residues 155-207 form a domain III region; it reads MDEGIQALAALGYSKPSAERMIAEAMSELPENASLAEILPIALKKNLQGLNKS.

This sequence belongs to the RuvA family. Homotetramer. Forms an RuvA(8)-RuvB(12)-Holliday junction (HJ) complex. HJ DNA is sandwiched between 2 RuvA tetramers; dsDNA enters through RuvA and exits via RuvB. An RuvB hexamer assembles on each DNA strand where it exits the tetramer. Each RuvB hexamer is contacted by two RuvA subunits (via domain III) on 2 adjacent RuvB subunits; this complex drives branch migration. In the full resolvosome a probable DNA-RuvA(4)-RuvB(12)-RuvC(2) complex forms which resolves the HJ.

The protein resides in the cytoplasm. Its function is as follows. The RuvA-RuvB-RuvC complex processes Holliday junction (HJ) DNA during genetic recombination and DNA repair, while the RuvA-RuvB complex plays an important role in the rescue of blocked DNA replication forks via replication fork reversal (RFR). RuvA specifically binds to HJ cruciform DNA, conferring on it an open structure. The RuvB hexamer acts as an ATP-dependent pump, pulling dsDNA into and through the RuvAB complex. HJ branch migration allows RuvC to scan DNA until it finds its consensus sequence, where it cleaves and resolves the cruciform DNA. The chain is Holliday junction branch migration complex subunit RuvA from Chlamydia caviae (strain ATCC VR-813 / DSM 19441 / 03DC25 / GPIC) (Chlamydophila caviae).